Here is a 108-residue protein sequence, read N- to C-terminus: Envelope small membrane protein (108 aa).

At 1 to 10 the chain is on the virion surface side; it reads MNLLNKSLEE. A helical transmembrane segment spans residues 11-31; that stretch reads NGSFLTALYIIVGFLALYLLG. At 32-108 the chain is on the intravirion side; it reads RALQAFVQAA…QDAQRDKLYS (77 aa). The disordered stretch occupies residues 88-108; the sequence is NGWNNKNPANFQDAQRDKLYS. Over residues 89 to 100 the composition is skewed to polar residues; sequence GWNNKNPANFQD.

Belongs to the gammacoronaviruses E protein family. Homooligomer. Interacts with the M membrane protein in the budding compartment of the host cell, which is located between endoplasmic reticulum and the Golgi complex. The cytoplasmic tails of both proteins are important for this function. Interacts with Nucleoprotein.

The protein resides in the host Golgi apparatus membrane. Functionally, plays a central role in virus morphogenesis and assembly. Acts as a viroporin and self-assembles in host membranes forming pentameric protein-lipid pores that allow ion transport. Also plays a role in the induction of apoptosis. The sequence is that of Envelope small membrane protein from Gallus gallus (Chicken).